The following is a 26-amino-acid chain: Guentherin (26 aa).

As to expression, expressed by the skin glands.

Its subcellular location is the secreted. Antimicrobial peptide. Active against the Gram-positive bacteria S.aureus FDA209P (MIC=35.5 ug/ml) and B.subtilis ATCC 6633 (MIC&gt;64 ug/ml), but not active against the Gram-negative bacterium E.coli or the fungus C.albicans. This is Guentherin from Sylvirana guentheri (Gunther's frog).